A 406-amino-acid polypeptide reads, in one-letter code: Imidazolonepropionase (406 aa).

Fe(3+)-binding residues include His-65 and His-67. 2 residues coordinate Zn(2+): His-65 and His-67. 4-imidazolone-5-propanoate is bound by residues Arg-74, Tyr-137, and His-170. Tyr-137 serves as a coordination point for N-formimidoyl-L-glutamate. Position 235 (His-235) interacts with Fe(3+). His-235 provides a ligand contact to Zn(2+). Gln-238 is a 4-imidazolone-5-propanoate binding site. Residue Asp-310 coordinates Fe(3+). Position 310 (Asp-310) interacts with Zn(2+). Positions 312 and 314 each coordinate N-formimidoyl-L-glutamate. Thr-315 is a binding site for 4-imidazolone-5-propanoate.

Belongs to the metallo-dependent hydrolases superfamily. HutI family. The cofactor is Zn(2+). Requires Fe(3+) as cofactor.

Its subcellular location is the cytoplasm. The catalysed reaction is 4-imidazolone-5-propanoate + H2O = N-formimidoyl-L-glutamate. The protein operates within amino-acid degradation; L-histidine degradation into L-glutamate; N-formimidoyl-L-glutamate from L-histidine: step 3/3. In terms of biological role, catalyzes the hydrolytic cleavage of the carbon-nitrogen bond in imidazolone-5-propanoate to yield N-formimidoyl-L-glutamate. It is the third step in the universal histidine degradation pathway. In Vibrio vulnificus (strain CMCP6), this protein is Imidazolonepropionase.